Reading from the N-terminus, the 735-residue chain is Polycomb protein sop-2 (735 aa).

Residues 1-15 are compositionally biased toward polar residues; the sequence is MSSNLTSNEMSSTSA. Disordered regions lie at residues 1-59, 223-288, and 300-534; these read MSSN…SSSS, AARS…APAA, and PQES…PVLQ. Residues 224–503 form an RNA-binding region; it reads ARSSRMAARR…APATPATPAS (280 aa). Residues 239 to 288 show a composition bias toward low complexity; it reads YRGAFRGAARGAPSRRPAPAAEVAPETPVAAPMAPAAPAAPATPEAAPAA. Composition is skewed to basic and acidic residues over residues 317-355 and 389-398; these read DTSKEGEASRPTSEKKKKIRTTEMDRLMSMDLGPKDGGR and RAAEKKKPED. The segment covering 399–413 has biased composition (acidic residues); it reads SDAAEEQEVEMEVDN. The segment covering 450-470 has biased composition (basic and acidic residues); the sequence is VEPKKEPVDEPAEKIPKRSEA. Residues 471 to 504 show a composition bias toward low complexity; it reads APEVPATATTKEAPPSTSSSPPDAPATPATPASS. Residues 520–534 show a composition bias toward polar residues; it reads LTGSPPESETPPVLQ. Residues 621–712 are SAM-like; that stretch reads LVENNHEATL…YGTEVLNHYR (92 aa).

In terms of assembly, homodimer. Interacts with ubc-9. Binds through its N-terminal region to the N-terminal region of sor-1. In terms of processing, sumoylated by ubc-9. Sumoylation is required for the transcriptional regulation of homeotic genes. As to expression, widely expressed. Weakly expressed in most somatic cells of 50-cell stage embryos. At 200 cell stage, it is strongly expressed. By comma stage, it is expressed in most somatic cells.

It is found in the nucleus. Functionally, polycomb group (PcG) protein. PcG proteins act by forming multiprotein complexes, which are required to maintain the transcriptionally repressive state of homeotic genes throughout development. PcG proteins are not required to initiate repression, but to maintain it during later stages of development. Also required to repress expression of other genes and for localization of sor-1. Binds RNA. In Caenorhabditis elegans, this protein is Polycomb protein sop-2 (sop-2).